The chain runs to 155 residues: Small ribosomal subunit protein uS7 (155 aa).

This sequence belongs to the universal ribosomal protein uS7 family. Part of the 30S ribosomal subunit. Contacts proteins S9 and S11.

Functionally, one of the primary rRNA binding proteins, it binds directly to 16S rRNA where it nucleates assembly of the head domain of the 30S subunit. Is located at the subunit interface close to the decoding center, probably blocks exit of the E-site tRNA. The sequence is that of Small ribosomal subunit protein uS7 from Thermosipho melanesiensis (strain DSM 12029 / CIP 104789 / BI429).